A 135-amino-acid chain; its full sequence is NAD(P)H-quinone oxidoreductase subunit 3 (135 aa).

3 consecutive transmembrane segments (helical) span residues 15 to 35 (IVFF…SSLV), 79 to 99 (MFAL…PWAV), and 104 to 124 (LGLL…VALV).

Belongs to the complex I subunit 3 family. In terms of assembly, NDH-1 can be composed of about 15 different subunits; different subcomplexes with different compositions have been identified which probably have different functions.

The protein localises to the cellular thylakoid membrane. The enzyme catalyses a plastoquinone + NADH + (n+1) H(+)(in) = a plastoquinol + NAD(+) + n H(+)(out). The catalysed reaction is a plastoquinone + NADPH + (n+1) H(+)(in) = a plastoquinol + NADP(+) + n H(+)(out). Its function is as follows. NDH-1 shuttles electrons from an unknown electron donor, via FMN and iron-sulfur (Fe-S) centers, to quinones in the respiratory and/or the photosynthetic chain. The immediate electron acceptor for the enzyme in this species is believed to be plastoquinone. Couples the redox reaction to proton translocation, and thus conserves the redox energy in a proton gradient. Cyanobacterial NDH-1 also plays a role in inorganic carbon-concentration. This chain is NAD(P)H-quinone oxidoreductase subunit 3, found in Trichodesmium erythraeum (strain IMS101).